A 288-amino-acid chain; its full sequence is Elongation factor Ts (288 aa).

The interval 80-83 is involved in Mg(2+) ion dislocation from EF-Tu; it reads TDFL.

Belongs to the EF-Ts family.

The protein resides in the cytoplasm. Associates with the EF-Tu.GDP complex and induces the exchange of GDP to GTP. It remains bound to the aminoacyl-tRNA.EF-Tu.GTP complex up to the GTP hydrolysis stage on the ribosome. The protein is Elongation factor Ts of Pseudomonas fluorescens (strain ATCC BAA-477 / NRRL B-23932 / Pf-5).